We begin with the raw amino-acid sequence, 251 residues long: Triosephosphate isomerase (251 aa).

Residue 9–11 (NWK) participates in substrate binding. H95 (electrophile) is an active-site residue. E167 serves as the catalytic Proton acceptor. Residues G173, S212, and 233-234 (GG) each bind substrate.

It belongs to the triosephosphate isomerase family. Homodimer.

Its subcellular location is the cytoplasm. It carries out the reaction D-glyceraldehyde 3-phosphate = dihydroxyacetone phosphate. The protein operates within carbohydrate biosynthesis; gluconeogenesis. It functions in the pathway carbohydrate degradation; glycolysis; D-glyceraldehyde 3-phosphate from glycerone phosphate: step 1/1. Involved in the gluconeogenesis. Catalyzes stereospecifically the conversion of dihydroxyacetone phosphate (DHAP) to D-glyceraldehyde-3-phosphate (G3P). In Pseudomonas aeruginosa (strain LESB58), this protein is Triosephosphate isomerase.